Here is a 350-residue protein sequence, read N- to C-terminus: Histidinol-phosphate aminotransferase 1 (350 aa).

The residue at position 211 (Lys-211) is an N6-(pyridoxal phosphate)lysine.

Belongs to the class-II pyridoxal-phosphate-dependent aminotransferase family. Histidinol-phosphate aminotransferase subfamily. As to quaternary structure, homodimer. Pyridoxal 5'-phosphate serves as cofactor.

It carries out the reaction L-histidinol phosphate + 2-oxoglutarate = 3-(imidazol-4-yl)-2-oxopropyl phosphate + L-glutamate. It functions in the pathway amino-acid biosynthesis; L-histidine biosynthesis; L-histidine from 5-phospho-alpha-D-ribose 1-diphosphate: step 7/9. This is Histidinol-phosphate aminotransferase 1 from Trichormus variabilis (strain ATCC 29413 / PCC 7937) (Anabaena variabilis).